The following is an 840-amino-acid chain: SLIT and NTRK-like protein 6 (840 aa).

Positions 1–18 (MKLWTYLLYPSLLACLSL) are cleaved as a signal peptide. The 46-residue stretch at 22–67 (SPMPSVRGSCDTLCNCEEKDGIMIINCEEKGINKLSQISVPPSRPF) folds into the LRRNT 1 domain. Residues 23–609 (PMPSVRGSCD…LTDAVPLSVL (587 aa)) are Extracellular-facing. LRR repeat units lie at residues 89–110 (NALS…AFNG), 113–134 (LLKQ…TFHG), 137–158 (NLEF…AFSK), 161–182 (RLKV…IFRF), and 184–205 (PLTH…GFLE). Residues 218–269 (NKWACNCELLQLKNWLENMPPQSIIGDVICYSPPPFKGSVLSRLKKESFCPT) enclose the LRRCT 1 domain. In terms of domain architecture, LRRNT 2 spans 319 to 360 (PSTQLPVPYCPIPCNCKVLSPSGLLIHCQERNIESLSDLQPP). 6 LRR repeats span residues 363–384 (NPRK…DLTD), 387–408 (TLEM…SFMN), 411–432 (RLQK…MFLG), 435–456 (SLEY…TFNP), 459–480 (KLKV…IFLG), and 482–503 (PLTR…NILD). In terms of domain architecture, LRRCT 2 spans 516–567 (NPWDCSCDLVGLQQWIHKLGKGTMTDDILCTSPGHLDKKELKALNSDLLCPG). Residues 610 to 630 (ILGLLIVFITIVFCAAGIVVF) form a helical membrane-spanning segment. Residues 631 to 840 (VLHRRRRYKK…DYLEVLEQQT (210 aa)) are Cytoplasmic-facing. The span at 717-726 (QRSLLERENH) shows a compositional bias: basic and acidic residues. The interval 717-736 (QRSLLERENHSPLTGSNMKY) is disordered. Residues 727 to 736 (SPLTGSNMKY) show a composition bias toward polar residues.

Belongs to the SLITRK family. As to expression, in the embryo, expressed in otic cyst, lateral trunk epidermis and underlying mesodermal tissue, limb bud, maxillary process, cochlea, retina, tongue, tooth primordium, central nervous system, and primordia of visceral organs including lung, gastrointestinal tract and pancreas. In the central nervous system, expressed primarily in dorsal thalamus, cerebellum and medulla.

The protein localises to the cell membrane. Functionally, regulator of neurite outgrowth required for normal hearing and vision. The sequence is that of SLIT and NTRK-like protein 6 (Slitrk6) from Mus musculus (Mouse).